Reading from the N-terminus, the 1166-residue chain is DEAD-box ATP-dependent RNA helicase 42 (1166 aa).

Composition is skewed to basic and acidic residues over residues 1 to 12 (MEVEKSKYRSED) and 21 to 45 (DLKKSRRDRDRSNERKKDKGSEKRR). A disordered region spans residues 1–460 (MEVEKSKYRS…NDDDPSLDED (460 aa)). Positions 14–95 (DVVEEEADLK…KDRVKRRSER (82 aa)) form a coiled coil. Residues 59–70 (SEDDYDRDDDEE) show a composition bias toward acidic residues. Positions 80–95 (ERRRRDKDRVKRRSER) are enriched in basic residues. The segment covering 101–110 (SEDDVEEEDE) has biased composition (acidic residues). Basic and acidic residues predominate over residues 111 to 206 (RDKRRVNEKE…RERERSREVG (96 aa)). Positions 130 to 302 (RGKDRKRDRE…KRKKEEAESE (173 aa)) form a coiled coil. At Ser210 the chain carries Phosphoserine. The segment covering 224–314 (EGGERKEKER…GDADGNEPKA (91 aa)) has biased composition (basic and acidic residues). Phosphoserine is present on Ser324. Composition is skewed to basic and acidic residues over residues 344–357 (ETKPENDGDAKMVD) and 416–426 (MNGKESGDRPK). A Q motif motif is present at residues 529 to 557 (KFWHQTGLTSKILDTMKKLNYEKPMPIQT). A Helicase ATP-binding domain is found at 560–738 (LPIIMSGRDC…RKVLNKPVEI (179 aa)). 573–580 (AKTGSGKT) provides a ligand contact to ATP. A DEAD box motif is present at residues 686 to 689 (DEAD). Residues 749–910 (DITQLVEVRP…PVPDDLKALA (162 aa)) form the Helicase C-terminal domain.

It belongs to the DEAD box helicase family. DDX46/PRP5 subfamily.

The protein resides in the nucleus. The catalysed reaction is ATP + H2O = ADP + phosphate + H(+). In terms of biological role, helicase required for pre-mRNA splicing, cold-responsive gene regulation and cold tolerance. This is DEAD-box ATP-dependent RNA helicase 42 (RH42) from Arabidopsis thaliana (Mouse-ear cress).